The sequence spans 236 residues: CBS domain-containing protein CBSX1, chloroplastic (236 aa).

A chloroplast-targeting transit peptide spans 1–53 (MDAVLYSVPLSFTPLRASSSPSSPYLLLPRFLSVQPCHKFTFSRSFPSKSRIP). Residues 47–66 (PSKSRIPSASSAAGSTLMTN) form a disordered region. Residue Ser-54 is modified to N-acetylserine. CBS domains lie at 81-142 (MTKK…GRTE) and 175-231 (MTPA…IKRS).

It localises to the plastid. It is found in the chloroplast. This Arabidopsis thaliana (Mouse-ear cress) protein is CBS domain-containing protein CBSX1, chloroplastic (CBSX1).